We begin with the raw amino-acid sequence, 607 residues long: Elongation factor 4 (607 aa).

The 183-residue stretch at 11–193 (GKIRNFSIIA…QIVEKVPAPT (183 aa)) folds into the tr-type G domain. Residues 23–28 (DHGKST) and 140–143 (NKID) contribute to the GTP site.

Belongs to the TRAFAC class translation factor GTPase superfamily. Classic translation factor GTPase family. LepA subfamily.

It localises to the cell membrane. The enzyme catalyses GTP + H2O = GDP + phosphate + H(+). Functionally, required for accurate and efficient protein synthesis under certain stress conditions. May act as a fidelity factor of the translation reaction, by catalyzing a one-codon backward translocation of tRNAs on improperly translocated ribosomes. Back-translocation proceeds from a post-translocation (POST) complex to a pre-translocation (PRE) complex, thus giving elongation factor G a second chance to translocate the tRNAs correctly. Binds to ribosomes in a GTP-dependent manner. The chain is Elongation factor 4 from Streptococcus pneumoniae (strain JJA).